The chain runs to 115 residues: Large ribosomal subunit protein bL20c (115 aa).

It belongs to the bacterial ribosomal protein bL20 family.

It localises to the plastid. The protein localises to the chloroplast. Binds directly to 23S ribosomal RNA and is necessary for the in vitro assembly process of the 50S ribosomal subunit. It is not involved in the protein synthesizing functions of that subunit. In Cycas taitungensis (Prince sago), this protein is Large ribosomal subunit protein bL20c.